Reading from the N-terminus, the 290-residue chain is Arylamine N-acetyltransferase 2 (290 aa).

The active-site Acyl-thioester intermediate is the Cys-68. Positions 103 and 104 each coordinate CoA. 106 to 107 provides a ligand contact to substrate; the sequence is IH. Active-site residues include His-107 and Asp-122. Position 208 (Tyr-208) interacts with CoA.

This sequence belongs to the arylamine N-acetyltransferase family.

It is found in the cytoplasm. The enzyme catalyses an arylamine + acetyl-CoA = an N-acetylarylamine + CoA. It carries out the reaction an N-hydroxyarylamine + acetyl-CoA = an N-acetoxyarylamine + CoA. In terms of biological role, catalyzes the N- or O-acetylation of various arylamine and heterocyclic amine substrates. Participates in the detoxification of a plethora of hydrazine and arylamine drugs. The polypeptide is Arylamine N-acetyltransferase 2 (Nat2) (Rattus norvegicus (Rat)).